We begin with the raw amino-acid sequence, 435 residues long: Cyclic 2,3-diphosphoglycerate synthetase (435 aa).

Belongs to the cyclic 2,3-diphosphoglycerate synthetase family.

The protein localises to the cytoplasm. It catalyses the reaction (2R)-2,3-bisphosphoglycerate + ATP + H(+) = cyclic (2R)-2,3-bisphosphoglycerate + ADP + phosphate. Functionally, catalyzes the formation of cyclic 2,3-diphosphoglycerate (cDPG) by formation of an intramolecular phosphoanhydride bond at the expense of ATP. The chain is Cyclic 2,3-diphosphoglycerate synthetase from Pyrococcus horikoshii (strain ATCC 700860 / DSM 12428 / JCM 9974 / NBRC 100139 / OT-3).